A 129-amino-acid polypeptide reads, in one-letter code: Glycine cleavage system H protein (129 aa).

The 83-residue stretch at 24 to 106 (TFTVGISEHA…YGDGWLFRIK (83 aa)) folds into the Lipoyl-binding domain. N6-lipoyllysine is present on Lys-65.

It belongs to the GcvH family. In terms of assembly, the glycine cleavage system is composed of four proteins: P, T, L and H. (R)-lipoate is required as a cofactor.

Functionally, the glycine cleavage system catalyzes the degradation of glycine. The H protein shuttles the methylamine group of glycine from the P protein to the T protein. The sequence is that of Glycine cleavage system H protein from Pseudoalteromonas atlantica (strain T6c / ATCC BAA-1087).